The following is a 609-amino-acid chain: MKWVESIFLIFLLNFTESRTLHRNEYGIASILDSYQCTAEISLADLATIFFAQFVQEATYKEVSKMVKDALTAIEKPTGDEQSSGCLENQLPAFLEELCHEKEILEKYGHSDCCSQSEEGRHNCFLAHKKPTPASIPLFQVPEPVTSCEAYEEDRETFMNKFIYEIARRHPFLYAPTILLWAARYDKIIPSCCKAENAVECFQTKAATVTKELRESSLLNQHACAVMKNFGTRTFQAITVTKLSQKFTKVNFTEIQKLVLDVAHVHEHCCRGDVLDCLQDGEKIMSYICSQQDTLSNKITECCKLTTLERGQCIIHAENDEKPEGLSPNLNRFLGDRDFNQFSSGEKNIFLASFVHEYSRRHPQLAVSVILRVAKGYQELLEKCFQTENPLECQDKGEEELQKYIQESQALAKRSCGLFQKLGEYYLQNAFLVAYTKKAPQLTSSELMAITRKMAATAATCCQLSEDKLLACGEGAADIIIGHLCIRHEMTPVNPGVGQCCTSSYANRRPCFSSLVVDETYVPPAFSDDKFIFHKDLCQAQGVALQTMKQEFLINLVKQKPQITEEQLEAVIADFSGLLEKCCQGQEQEVCFAEEGQKLISKTRAALGV.

The first 18 residues, methionine 1 to serine 18, serve as a signal peptide directing secretion. 3 consecutive Albumin domains span residues arginine 19–threonine 210, lysine 211–glutamine 402, and lysine 403–serine 601. Residue histidine 22 participates in Cu(2+) binding. Cystine bridges form between cysteine 99-cysteine 114, cysteine 113-cysteine 124, cysteine 148-cysteine 193, cysteine 192-cysteine 201, cysteine 224-cysteine 270, cysteine 269-cysteine 277, cysteine 289-cysteine 303, and cysteine 302-cysteine 313. A phosphoserine; by FAM20C mark is found at serine 111, serine 115, and serine 117. A glycan (N-linked (GlcNAc...) asparagine) is linked at asparagine 251. At serine 344 the chain carries Phosphoserine; by FAM20C. 7 disulfides stabilise this stretch: cysteine 384/cysteine 393, cysteine 416/cysteine 462, cysteine 461/cysteine 472, cysteine 485/cysteine 501, cysteine 500/cysteine 511, cysteine 538/cysteine 583, and cysteine 582/cysteine 591. 2 positions are modified to phosphoserine; by FAM20C: serine 444 and serine 445.

The protein belongs to the ALB/AFP/VDB family. As to quaternary structure, dimeric and trimeric forms have been found in addition to the monomeric form. Post-translationally, independent studies suggest heterogeneity of the N-terminal sequence of the mature protein and of the cleavage site of the signal sequence. In terms of processing, sulfated. In terms of tissue distribution, plasma. Synthesized by the fetal liver and yolk sac.

The protein resides in the secreted. Binds copper, nickel, and fatty acids as well as, and bilirubin less well than, serum albumin. Only a small percentage (less than 2%) of the human AFP shows estrogen-binding properties. This is Alpha-fetoprotein (AFP) from Homo sapiens (Human).